Reading from the N-terminus, the 429-residue chain is Arsenical pump membrane protein (429 aa).

Over 1 to 20 the chain is Cytoplasmic; the sequence is MLLAGAIFVLTIVLVIWQPK. A helical transmembrane segment spans residues 21-41; the sequence is GLGIGWSATLGAVLALVTGVV. At 42-45 the chain is on the periplasmic side; it reads HPGD. A helical transmembrane segment spans residues 46-66; the sequence is IPVVWNIVWNATAAFIAVIII. Residues 67 to 97 lie on the Cytoplasmic side of the membrane; the sequence is SLLLDESGFFEWAALHVSRWGNGRGRLLFTW. The helical transmembrane segment at 98-118 threads the bilayer; it reads IVLLGAAVAALFANDGAALIL. Over 119–120 the chain is Periplasmic; sequence TP. Residues 121–141 traverse the membrane as a helical segment; sequence IVIAMLLALGFSKGTTLAFVM. The Cytoplasmic portion of the chain corresponds to 142-151; that stretch reads AAGFIADTAS. The chain crosses the membrane as a helical span at residues 152 to 172; that stretch reads LPLIVSNLVNIVSADFFGLGF. Topologically, residues 173-177 are periplasmic; it reads REYAS. A helical transmembrane segment spans residues 178 to 198; sequence VMVPVDIAAIVATLVMLHLYF. Residues 199 to 227 are Cytoplasmic-facing; sequence RKDIPQNYDMALLKSPAEAIKDPATFKTG. A run of 2 helical transmembrane segments spans residues 228 to 248 and 249 to 269; these read WVVLLLLLVGFFVLEPLGIPV and SAIAAVGALILFVVAKRGHAI. The Cytoplasmic segment spans residues 270–273; it reads NTGK. The helical transmembrane segment at 274–294 threads the bilayer; that stretch reads VLRGAPWQIVIFSLGMYLVVY. Over 295 to 310 the chain is Periplasmic; the sequence is GLRNAGLTEYLSGVLN. The chain crosses the membrane as a helical span at residues 311–331; the sequence is VLADNGLWAATLGTGFLTAFL. The Cytoplasmic segment spans residues 332 to 406; the sequence is SSIMNNMPTV…ISWGYYFRTG (75 aa). A helical membrane pass occupies residues 407 to 427; that stretch reads IIMTLPVLFVTLAALALRLSF. Residues 428–429 are Periplasmic-facing; sequence TL.

Belongs to the ArsB family.

It localises to the cell inner membrane. Involved in arsenical resistance. Thought to form the channel of an arsenite pump. This Shigella flexneri protein is Arsenical pump membrane protein (arsB).